The following is a 344-amino-acid chain: MSSSVASTENIVENMLHPKTTEIYFSLNNGVRIPALGLGTANPHEKLAETKQAVKAAIKAGYRHIDTAWAYETEPFVGEAIKELLEDGSIKREDLFITTKVWPVLWDEVDRSLNESLKALGLEYVDLLLQHWPLCFEKIKDPKGISGLVKTPVDDSGKTMYAADGDYLETYKQLEKIYLDPNDHRVRAIGVSNFSIEYLERLIKECRVKPTVNQVETHPHLPQMELRKFCFMHDILLTAYSPLGSHGAPNLKIPLVKKLAEKYNVTGNDLLISYHIRQGTIVIPRSLNPVRISSSIEFASLTKDELQELNDFGEKYPVRFIDEPFAAILPEFTGNGPNLDNLKY.

Tyr71 serves as the catalytic Proton donor. Substrate is bound at residue His131. At Thr151 the chain carries Phosphothreonine. 241–295 (SPLGSHGAPNLKIPLVKKLAEKYNVTGNDLLISYHIRQGTIVIPRSLNPVRISSS) contacts NADP(+).

This sequence belongs to the aldo/keto reductase family. As to quaternary structure, heterodimer of a heavy chain and a light chain.

Its subcellular location is the cytoplasm. It catalyses the reaction D-arabinose + NADP(+) = D-arabinono-1,4-lactone + NADPH + H(+). The catalysed reaction is D-arabinose + NAD(+) = D-arabinono-1,4-lactone + NADH + H(+). Catalyzes the oxidation of D-arabinose, L-xylose, L-fucose and L-galactose in the presence of NADP(+). The protein is D-arabinose dehydrogenase [NAD(P)+] heavy chain (ARA1) of Saccharomyces cerevisiae (strain ATCC 204508 / S288c) (Baker's yeast).